A 424-amino-acid chain; its full sequence is MSILIKNGYVVYGENLEVIKADVLIESNKIVEVAKNINKSADTVIDAKGKVVSPGFVNLHTHSPMGLFRGLADDLPLMDWLQDHIWPKEAKLTREYTKVGAYLGALEMIKSGTTTFLDMYFFMDAVAEVTLESGLRGYLSYGMIDLGDPEKTEKEVNEALRIMKFIEGLDSDRVHFVFGPHAPYTCSIALLKEVRRLANEHGKLITIHVSETMAEIGQISERYGKSPVVLLDDIGFFGRDVIIAHGVWLDSRDIQILARHGVTVAHNPASNMKLASGVMPLQRLLNAGVNVGLGTDGSASNNNLDMLDEMKLAALLHKVHNLDPTVADAETVFRMATVNGARALGLKAGIIKEGYLADIAIIDFNKPHLRPINNVISHLVYSANGNDVETTIVDGKVLMLDRELFTLDEEKILNDAERVIGELT.

Zn(2+)-binding residues include histidine 60 and histidine 62. Positions 89 and 181 each coordinate substrate. Zn(2+) is bound at residue histidine 208. Substrate contacts are provided by glutamate 211 and aspartate 296. Aspartate 296 contacts Zn(2+).

Belongs to the metallo-dependent hydrolases superfamily. MTA/SAH deaminase family. Zn(2+) is required as a cofactor.

The enzyme catalyses S-adenosyl-L-homocysteine + H2O + H(+) = S-inosyl-L-homocysteine + NH4(+). The catalysed reaction is S-methyl-5'-thioadenosine + H2O + H(+) = S-methyl-5'-thioinosine + NH4(+). Functionally, catalyzes the deamination of 5-methylthioadenosine and S-adenosyl-L-homocysteine into 5-methylthioinosine and S-inosyl-L-homocysteine, respectively. Is also able to deaminate adenosine. The polypeptide is 5-methylthioadenosine/S-adenosylhomocysteine deaminase (Thermococcus onnurineus (strain NA1)).